A 241-amino-acid chain; its full sequence is Protein-L-isoaspartate O-methyltransferase (241 aa).

Ser69 is an active-site residue.

It belongs to the methyltransferase superfamily. L-isoaspartyl/D-aspartyl protein methyltransferase family.

The protein localises to the cytoplasm. The catalysed reaction is [protein]-L-isoaspartate + S-adenosyl-L-methionine = [protein]-L-isoaspartate alpha-methyl ester + S-adenosyl-L-homocysteine. Its function is as follows. Catalyzes the methyl esterification of L-isoaspartyl residues in peptides and proteins that result from spontaneous decomposition of normal L-aspartyl and L-asparaginyl residues. It plays a role in the repair and/or degradation of damaged proteins. This is Protein-L-isoaspartate O-methyltransferase from Hyperthermus butylicus (strain DSM 5456 / JCM 9403 / PLM1-5).